A 157-amino-acid chain; its full sequence is Endoribonuclease YbeY (157 aa).

Zn(2+) contacts are provided by His-114, His-118, and His-124.

It belongs to the endoribonuclease YbeY family. The cofactor is Zn(2+).

It is found in the cytoplasm. Its function is as follows. Single strand-specific metallo-endoribonuclease involved in late-stage 70S ribosome quality control and in maturation of the 3' terminus of the 16S rRNA. The protein is Endoribonuclease YbeY of Yersinia enterocolitica serotype O:8 / biotype 1B (strain NCTC 13174 / 8081).